The following is a 388-amino-acid chain: MNLHEYQGKQLFKEYGLPVSEGYAADTAQGAVEAADRIGGEEWVVKCQVHAGGRGKAGGVKLVKNKDDIRAFAENWLGKNLVTFQTDENGQPVSKILVESCTDIANELYLGAVVDRTTRRVVFMASTEGGVEIETVAEETPEKILKAEIDPIVGPQPYQAREMAFALGLSGVQIKQFTQIFLGLAKMFEELDVALIEINPLVIKTDGNLHCLDAKVGIDGNALYRQPKLKDMQDPSQEDAREAHAAQWELNYVALDGNVGCMVNGAGLAMGTMDIVNLHGGKPANFLDVGGGATKERVAEAFKIILSDDNVKAVLVNIFGGIVRCDMIAEGIIGAVKEVGVEVPVVVRLEGTNAELGREVLANSGLDIIAAESLTDAAQKVVAAAEGK.

Positions 9–244 (KQLFKEYGLP…PSQEDAREAH (236 aa)) constitute an ATP-grasp domain. Residues Lys46, 53–55 (GRG), Glu99, Thr102, and Glu107 each bind ATP. The Mg(2+) site is built by Asn199 and Asp213. Residues Asn264 and 321–323 (GIV) each bind substrate.

The protein belongs to the succinate/malate CoA ligase beta subunit family. In terms of assembly, heterotetramer of two alpha and two beta subunits. Requires Mg(2+) as cofactor.

The catalysed reaction is succinate + ATP + CoA = succinyl-CoA + ADP + phosphate. It catalyses the reaction GTP + succinate + CoA = succinyl-CoA + GDP + phosphate. It participates in carbohydrate metabolism; tricarboxylic acid cycle; succinate from succinyl-CoA (ligase route): step 1/1. Its function is as follows. Succinyl-CoA synthetase functions in the citric acid cycle (TCA), coupling the hydrolysis of succinyl-CoA to the synthesis of either ATP or GTP and thus represents the only step of substrate-level phosphorylation in the TCA. The beta subunit provides nucleotide specificity of the enzyme and binds the substrate succinate, while the binding sites for coenzyme A and phosphate are found in the alpha subunit. The protein is Succinate--CoA ligase [ADP-forming] subunit beta of Alteromonas mediterranea (strain DSM 17117 / CIP 110805 / LMG 28347 / Deep ecotype).